The chain runs to 351 residues: Probable glucuronosyltransferase Os10g0205300 (351 aa).

Topologically, residues 1–11 are cytoplasmic; it reads MAAPPCPPRRP. The helical; Signal-anchor for type II membrane protein transmembrane segment at 12 to 32 threads the bilayer; the sequence is ISAPCFLLCFLLGFVAGLFPF. Over 33-351 the chain is Lumenal; sequence AHRHLHLDLH…PLKKEARPLL (319 aa). Positions 138–169 are disordered; it reads SSPVPDAPQDRPRRRGRRQDRPAVDSRARQRN. The span at 156–169 shows a compositional bias: basic and acidic residues; that stretch reads QDRPAVDSRARQRN. An N-linked (GlcNAc...) asparagine glycan is attached at Asn-259.

This sequence belongs to the glycosyltransferase 43 family.

It is found in the golgi apparatus membrane. Its function is as follows. Involved in the synthesis of glucuronoxylan hemicellulose in secondary cell walls. The sequence is that of Probable glucuronosyltransferase Os10g0205300 from Oryza sativa subsp. japonica (Rice).